A 154-amino-acid polypeptide reads, in one-letter code: Histone H2B.v3 (154 aa).

Over residues 1 to 11 (MVFVKGQKKAT) the composition is skewed to basic residues. Residues 1–48 (MVFVKGQKKATKGSTQSGEEKTASTTPKVTKTPTEGGEKKRKKRKSDY) form a disordered region. The segment covering 12–27 (KGSTQSGEEKTASTTP) has biased composition (polar residues).

Belongs to the histone H2B family. As to quaternary structure, the nucleosome is a histone octamer containing two molecules each of H2A, H2B, H3 and H4 assembled in one H3-H4 heterotetramer and two H2A-H2B heterodimers. The octamer wraps approximately 147 bp of DNA.

Its subcellular location is the nucleus. The protein resides in the chromosome. Core component of nucleosome which plays a central role in DNA double strand break (DSB) repair. Nucleosomes wrap and compact DNA into chromatin, limiting DNA accessibility to the cellular machineries which require DNA as a template. Histones thereby play a central role in transcription regulation, DNA repair, DNA replication and chromosomal stability. DNA accessibility is regulated via a complex set of post-translational modifications of histones, also called histone code, and nucleosome remodeling. The protein is Histone H2B.v3 (H2Bv3) of Dictyostelium discoideum (Social amoeba).